Consider the following 109-residue polypeptide: Aquaporin-2 (109 aa).

Over 1 to 6 (SIAFSR) the chain is Cytoplasmic. A helical membrane pass occupies residues 7–27 (AVFSEFLATLLFVFFGLGSAL). Topologically, residues 28–35 (NWPQALPS) are extracellular. Residues 36 to 54 (VLQIAMAFGLAIGTLVQTL) traverse the membrane as a helical segment. Over 55–59 (GHISG) the chain is Cytoplasmic. The segment at residues 60-69 (AHINPAVTVA) is an intramembrane region (discontinuously helical). An NPA 1 motif is present at residues 63 to 65 (NPA). The Cytoplasmic portion of the chain corresponds to 70-80 (CLVGCHVSFLR). The helical transmembrane segment at 81-102 (ATFYVAAQLLGAVAGAALLHEL) threads the bilayer. At 103–109 (TPPDIRG) the chain is on the extracellular side.

It belongs to the MIP/aquaporin (TC 1.A.8) family. As to quaternary structure, homotetramer. In terms of processing, serine phosphorylation is necessary and sufficient for expression at the apical membrane. Endocytosis is not phosphorylation-dependent. N-glycosylated.

The protein localises to the apical cell membrane. The protein resides in the basolateral cell membrane. Its subcellular location is the cell membrane. It is found in the cytoplasmic vesicle membrane. It localises to the golgi apparatus. The protein localises to the trans-Golgi network membrane. The enzyme catalyses H2O(in) = H2O(out). It catalyses the reaction glycerol(in) = glycerol(out). Forms a water-specific channel that provides the plasma membranes of renal collecting duct with high permeability to water, thereby permitting water to move in the direction of an osmotic gradient. Plays an essential role in renal water homeostasis. Could also be permeable to glycerol. The chain is Aquaporin-2 from Amblysomus hottentotus (Hottentot golden mole).